The primary structure comprises 284 residues: Probable tRNA-splicing endonuclease subunit sen34 (284 aa).

Residues Tyr206, His214, and Lys245 contribute to the active site.

This sequence belongs to the tRNA-intron endonuclease family. As to quaternary structure, heterotetramer composed of sen2, sen15, sen34 and sen54. Interacts directly with sen15.

It carries out the reaction pretRNA = a 3'-half-tRNA molecule with a 5'-OH end + a 5'-half-tRNA molecule with a 2',3'-cyclic phosphate end + an intron with a 2',3'-cyclic phosphate and a 5'-hydroxyl terminus.. Constitutes one of the two catalytic subunit of the tRNA-splicing endonuclease complex, a complex responsible for identification and cleavage of the splice sites in pre-tRNA. It cleaves pre-tRNA at the 5'- and 3'-splice sites to release the intron. The products are an intron and two tRNA half-molecules bearing 2',3'-cyclic phosphate and 5'-OH termini. There are no conserved sequences at the splice sites, but the intron is invariably located at the same site in the gene, placing the splice sites an invariant distance from the constant structural features of the tRNA body. It probably carries the active site for 3'-splice site cleavage. This is Probable tRNA-splicing endonuclease subunit sen34 (sen34) from Schizosaccharomyces pombe (strain 972 / ATCC 24843) (Fission yeast).